Here is a 275-residue protein sequence, read N- to C-terminus: Undecaprenyl-diphosphatase 2 (275 aa).

A run of 7 helical transmembrane segments spans residues 48 to 68, 90 to 110, 117 to 137, 154 to 174, 195 to 215, 223 to 243, and 254 to 274; these read NAYV…ALLF, GLTL…GLLF, IFHV…MIAA, ISYK…WPGF, ANFT…LSLI, ISLL…SLVV, and IKLV…LFLF.

This sequence belongs to the UppP family.

It is found in the cell membrane. The catalysed reaction is di-trans,octa-cis-undecaprenyl diphosphate + H2O = di-trans,octa-cis-undecaprenyl phosphate + phosphate + H(+). Its function is as follows. Catalyzes the dephosphorylation of undecaprenyl diphosphate (UPP). Confers resistance to bacitracin. This is Undecaprenyl-diphosphatase 2 from Shouchella clausii (strain KSM-K16) (Alkalihalobacillus clausii).